The sequence spans 259 residues: Ribonuclease PH (259 aa).

Phosphate is bound by residues Arg88 and 126 to 128 (GTR).

The protein belongs to the RNase PH family. As to quaternary structure, homohexameric ring arranged as a trimer of dimers.

It carries out the reaction tRNA(n+1) + phosphate = tRNA(n) + a ribonucleoside 5'-diphosphate. Phosphorolytic 3'-5' exoribonuclease that plays an important role in tRNA 3'-end maturation. Removes nucleotide residues following the 3'-CCA terminus of tRNAs; can also add nucleotides to the ends of RNA molecules by using nucleoside diphosphates as substrates, but this may not be physiologically important. Probably plays a role in initiation of 16S rRNA degradation (leading to ribosome degradation) during starvation. This chain is Ribonuclease PH, found in Mycobacterium ulcerans (strain Agy99).